Here is a 166-residue protein sequence, read N- to C-terminus: Large ribosomal subunit protein mL49 (166 aa).

Belongs to the mitochondrion-specific ribosomal protein mL49 family. In terms of assembly, component of the mitochondrial ribosome large subunit (39S) which comprises a 16S rRNA and about 50 distinct proteins. Interacts with OXA1L.

The protein resides in the mitochondrion. The protein is Large ribosomal subunit protein mL49 (MRPL49) of Bos taurus (Bovine).